The chain runs to 192 residues: UPF0462 protein C4orf33 homolog (192 aa).

Belongs to the UPF0462 family.

This chain is UPF0462 protein C4orf33 homolog (D3Ertd751e), found in Mus musculus (Mouse).